The following is a 201-amino-acid chain: Small ribosomal subunit protein uS4 (201 aa).

Residues Leu26–Gly48 form a disordered region. Positions Gly92–Leu155 constitute an S4 RNA-binding domain.

It belongs to the universal ribosomal protein uS4 family. As to quaternary structure, part of the 30S ribosomal subunit. Contacts protein S5. The interaction surface between S4 and S5 is involved in control of translational fidelity.

Its function is as follows. One of the primary rRNA binding proteins, it binds directly to 16S rRNA where it nucleates assembly of the body of the 30S subunit. With S5 and S12 plays an important role in translational accuracy. This is Small ribosomal subunit protein uS4 from Bacteroides thetaiotaomicron (strain ATCC 29148 / DSM 2079 / JCM 5827 / CCUG 10774 / NCTC 10582 / VPI-5482 / E50).